A 415-amino-acid chain; its full sequence is ORC1-type DNA replication protein 2 (415 aa).

Residues 69–73, Tyr215, and Arg227 each bind ATP; that span reads TGKSV.

The protein belongs to the CDC6/cdc18 family.

Its function is as follows. Involved in regulation of DNA replication. This is ORC1-type DNA replication protein 2 (cdc6-2) from Sulfolobus acidocaldarius (strain ATCC 33909 / DSM 639 / JCM 8929 / NBRC 15157 / NCIMB 11770).